Here is a 227-residue protein sequence, read N- to C-terminus: Urease accessory protein UreF (227 aa).

The protein belongs to the UreF family. As to quaternary structure, ureD, UreF and UreG form a complex that acts as a GTP-hydrolysis-dependent molecular chaperone, activating the urease apoprotein by helping to assemble the nickel containing metallocenter of UreC. The UreE protein probably delivers the nickel.

It is found in the cytoplasm. In terms of biological role, required for maturation of urease via the functional incorporation of the urease nickel metallocenter. In Actinobacillus pleuropneumoniae serotype 3 (strain JL03), this protein is Urease accessory protein UreF.